The sequence spans 233 residues: Pre-hexon-linking protein VIII (233 aa).

A Phosphothreonine; by host modification is found at Thr-64. Residues 112-163 constitute a propeptide that is removed on maturation; that stretch reads SRHVRFRGRSSPYSPGPIKRLIIRGRGIQLNDEVVSSLTGLRPDGVFQLGGA. At Ser-180 the chain carries Phosphoserine; by host.

It belongs to the adenoviridae hexon-linking protein family. Interacts with the peripentonal hexons as well as the hexons in the facets. Part of a complex composed of the core-capsid bridging protein, the endosome lysis protein VI and the hexon-linking protein VIII; these interactions bridge the virus core to the capsid. In terms of processing, cleaved by the viral protease during virion maturation. May cause the middle segment to be shed from the capsid.

The protein localises to the virion. The protein resides in the host nucleus. Its function is as follows. Structural component of the virion that acts as a cement protein on the capsid interior and which glue the peripentonal hexons and group-of-nine hexons together. The polypeptide is Pre-hexon-linking protein VIII (Homo sapiens (Human)).